The sequence spans 340 residues: GTP 3',8-cyclase (340 aa).

The region spanning Lys-8–Glu-227 is the Radical SAM core domain. Position 17 (Arg-17) interacts with GTP. The [4Fe-4S] cluster site is built by Cys-24 and Cys-28. S-adenosyl-L-methionine is bound at residue Tyr-30. Position 31 (Cys-31) interacts with [4Fe-4S] cluster. Arg-71 provides a ligand contact to GTP. An S-adenosyl-L-methionine-binding site is contributed by Gly-75. Residue Thr-102 coordinates GTP. Position 126 (Ser-126) interacts with S-adenosyl-L-methionine. Lys-163 contacts GTP. Residue Met-197 participates in S-adenosyl-L-methionine binding. [4Fe-4S] cluster contacts are provided by Cys-261 and Cys-264. Arg-266–Arg-268 is a GTP binding site. Cys-278 is a [4Fe-4S] cluster binding site.

This sequence belongs to the radical SAM superfamily. MoaA family. In terms of assembly, monomer and homodimer. The cofactor is [4Fe-4S] cluster.

It catalyses the reaction GTP + AH2 + S-adenosyl-L-methionine = (8S)-3',8-cyclo-7,8-dihydroguanosine 5'-triphosphate + 5'-deoxyadenosine + L-methionine + A + H(+). It functions in the pathway cofactor biosynthesis; molybdopterin biosynthesis. In terms of biological role, catalyzes the cyclization of GTP to (8S)-3',8-cyclo-7,8-dihydroguanosine 5'-triphosphate. This Staphylococcus haemolyticus (strain JCSC1435) protein is GTP 3',8-cyclase.